A 362-amino-acid chain; its full sequence is Vignain (362 aa).

An N-terminal signal peptide occupies residues 1-20 (MAMKKLLWVVLSLSLVLGVA). A propeptide spans 21-126 (NSFDFHEKDL…SGTFMYEKVG (106 aa)) (activation peptide). Cystine bridges form between Cys149–Cys191, Cys183–Cys224, and Cys282–Cys334. Cys152 is an active-site residue. Catalysis depends on residues His288 and Asn309. N-linked (GlcNAc...) asparagine glycans are attached at residues Asn326 and Asn346. Residues 353–362 (GSLSSPKDEL) constitute a propeptide, removed in mature form. Residues 359-362 (KDEL) carry the Prevents secretion from ER motif.

The protein belongs to the peptidase C1 family. Post-translationally, the mature protein is not glycosylated. The precursor stored in the endoplasmic reticulum lumen is processed during the transport to proteins bodies to two dominant mature forms that differ by a single amino acid residue at the N-terminus.

The protein localises to the endoplasmic reticulum lumen. Its subcellular location is the vacuole. It is found in the aleurone grain. In terms of biological role, thought to be involved in the hydrolysis of stored seed proteins. In vitro, catalyzes the hydrolysis of proteins, such as azocasein. Shows a preferential cleavage for Asn-|-Xaa in small molecule substrates such as Boc-Asn-|-OPHNO(2). The sequence is that of Vignain from Vigna mungo (Black gram).